A 288-amino-acid chain; its full sequence is Protoheme IX farnesyltransferase (288 aa).

9 helical membrane passes run 8 to 28, 35 to 55, 75 to 95, 105 to 125, 130 to 150, 161 to 181, 205 to 225, 230 to 250, and 265 to 285; these read IIKPGIIFGNIISTIGGFLLA, VNLFIFTISATAILIASASIF, IAIGLISSNIAYIYALILLIL, FLTIFISMLGFFIYVFIYSLL, SVYSTIIGSLSGATPPIIGYC, FILLCIFSFWQIPHSYAIGLV, INIIIYIIAFFISTIMLFFAG, NYLFFSIFFGLIWIFIAIKGF, and IFLFSIVIITAISILISIDYK.

Belongs to the UbiA prenyltransferase family. Protoheme IX farnesyltransferase subfamily.

It is found in the cell membrane. The catalysed reaction is heme b + (2E,6E)-farnesyl diphosphate + H2O = Fe(II)-heme o + diphosphate. Its pathway is porphyrin-containing compound metabolism; heme O biosynthesis; heme O from protoheme: step 1/1. Functionally, converts heme B (protoheme IX) to heme O by substitution of the vinyl group on carbon 2 of heme B porphyrin ring with a hydroxyethyl farnesyl side group. The protein is Protoheme IX farnesyltransferase of Wigglesworthia glossinidia brevipalpis.